Reading from the N-terminus, the 296-residue chain is Elongation factor Ts (296 aa).

Residues 82–85 (TDFV) are involved in Mg(2+) ion dislocation from EF-Tu.

The protein belongs to the EF-Ts family.

Its subcellular location is the cytoplasm. Functionally, associates with the EF-Tu.GDP complex and induces the exchange of GDP to GTP. It remains bound to the aminoacyl-tRNA.EF-Tu.GTP complex up to the GTP hydrolysis stage on the ribosome. This Aromatoleum aromaticum (strain DSM 19018 / LMG 30748 / EbN1) (Azoarcus sp. (strain EbN1)) protein is Elongation factor Ts.